The chain runs to 159 residues: Probable cyclic pyranopterin monophosphate synthase (159 aa).

Substrate-binding positions include 75–77 (LCH) and 111–112 (ME). Asp126 is a catalytic residue.

Belongs to the MoaC family. In terms of assembly, homohexamer; trimer of dimers.

It catalyses the reaction (8S)-3',8-cyclo-7,8-dihydroguanosine 5'-triphosphate = cyclic pyranopterin phosphate + diphosphate. It participates in cofactor biosynthesis; molybdopterin biosynthesis. In terms of biological role, catalyzes the conversion of (8S)-3',8-cyclo-7,8-dihydroguanosine 5'-triphosphate to cyclic pyranopterin monophosphate (cPMP). The protein is Probable cyclic pyranopterin monophosphate synthase of Pyrococcus horikoshii (strain ATCC 700860 / DSM 12428 / JCM 9974 / NBRC 100139 / OT-3).